We begin with the raw amino-acid sequence, 20 residues long: Cruzioseptin-15 (20 aa).

In terms of tissue distribution, expressed by the skin glands.

It is found in the secreted. Its function is as follows. Has antimicrobial activity. In Cruziohyla calcarifer (Splendid leaf frog), this protein is Cruzioseptin-15.